Reading from the N-terminus, the 562-residue chain is Tripeptidyl-peptidase 1 (562 aa).

Positions 1–19 are cleaved as a signal peptide; it reads MGLQARLLGLLALVIAGKC. Residues 20-194 constitute a propeptide, removed in mature form; that stretch reads TYNPEPDQRW…PEPQQVGTVS (175 aa). An intrachain disulfide couples Cys-111 to Cys-122. The 365-residue stretch at 198–562 folds into the Peptidase S53 domain; sequence GVTPSVLRQR…PALLKTLLNP (365 aa). The N-linked (GlcNAc...) asparagine glycan is linked to Asn-209. Residue Asn-221 is glycosylated (N-linked (GlcNAc...) (high mannose) asparagine). Catalysis depends on charge relay system residues Glu-271 and Asp-275. Residues Asn-285, Asn-312, and Asn-442 are each glycosylated (N-linked (GlcNAc...) asparagine). Intrachain disulfides connect Cys-364-Cys-525 and Cys-521-Cys-536. Ser-474 serves as the catalytic Charge relay system. Positions 516 and 517 each coordinate Ca(2+). Ca(2+) contacts are provided by Gly-538, Gly-540, and Asp-542.

As to quaternary structure, monomer. Interacts with CLN5. Interacts with CLN3. Ca(2+) serves as cofactor. Activated by autocatalytic proteolytical processing upon acidification. N-glycosylation is required for processing and activity.

The protein localises to the lysosome. It is found in the melanosome. The catalysed reaction is Release of an N-terminal tripeptide from a polypeptide, but also has endopeptidase activity.. Functionally, lysosomal serine protease with tripeptidyl-peptidase I activity. May act as a non-specific lysosomal peptidase which generates tripeptides from the breakdown products produced by lysosomal proteinases. Requires substrates with an unsubstituted N-terminus. The polypeptide is Tripeptidyl-peptidase 1 (Tpp1) (Mus musculus (Mouse)).